A 1262-amino-acid polypeptide reads, in one-letter code: Clustered mitochondria protein homolog (1262 aa).

A disordered region spans residues Met-1–Thr-47. Polar residues predominate over residues Ser-31–Asp-40. The 246-residue stretch at Ala-335 to Leu-580 folds into the Clu domain.

Belongs to the CLU family.

The protein resides in the cytoplasm. MRNA-binding protein involved in proper cytoplasmic distribution of mitochondria. This Caenorhabditis briggsae protein is Clustered mitochondria protein homolog.